Consider the following 401-residue polypeptide: 8-amino-7-oxononanoate synthase (401 aa).

Substrate is bound at residue arginine 24. 111–112 contacts pyridoxal 5'-phosphate; the sequence is GF. Histidine 137 is a binding site for substrate. Pyridoxal 5'-phosphate is bound by residues serine 183, histidine 211, and threonine 240. Lysine 243 carries the post-translational modification N6-(pyridoxal phosphate)lysine. A substrate-binding site is contributed by threonine 357.

Belongs to the class-II pyridoxal-phosphate-dependent aminotransferase family. BioF subfamily. Homodimer. Pyridoxal 5'-phosphate is required as a cofactor.

The enzyme catalyses 6-carboxyhexanoyl-[ACP] + L-alanine + H(+) = (8S)-8-amino-7-oxononanoate + holo-[ACP] + CO2. It functions in the pathway cofactor biosynthesis; biotin biosynthesis. Functionally, catalyzes the decarboxylative condensation of pimeloyl-[acyl-carrier protein] and L-alanine to produce 8-amino-7-oxononanoate (AON), [acyl-carrier protein], and carbon dioxide. This chain is 8-amino-7-oxononanoate synthase, found in Xanthomonas axonopodis pv. citri (strain 306).